The primary structure comprises 470 residues: Neuraminidase (470 aa).

At 1-6 the chain is on the intravirion side; sequence MNPNQK. The chain crosses the membrane as a helical span at residues 7–27; sequence IITIGSISIAIGIISLMLQIG. Residues 11–33 form an involved in apical transport and lipid raft association region; that stretch reads GSISIAIGIISLMLQIGNIISIW. Topologically, residues 28-470 are virion surface; that stretch reads NIISIWASHS…GAELPFTIDK (443 aa). The interval 36 to 90 is hypervariable stalk region; the sequence is HSIQTGSQNHTGICNQRIITYENSTWVNHTYVNINNTNVVAGKDKTSVTLAGNSS. Residues N44, N58, N63, N70, and N88 are each glycosylated (N-linked (GlcNAc...) asparagine; by host). The tract at residues 91-470 is head of neuraminidase; that stretch reads LCSISGWAIY…GAELPFTIDK (380 aa). Cystine bridges form between C92–C417, C124–C129, C184–C231, C233–C238, C279–C292, C281–C290, C318–C335, and C421–C447. R118 is a substrate binding site. Residue N146 is glycosylated (N-linked (GlcNAc...) asparagine; by host). The active-site Proton donor/acceptor is D151. Position 152 (R152) interacts with substrate. N-linked (GlcNAc...) asparagine; by host glycosylation occurs at N235. 277–278 is a binding site for substrate; sequence EE. Residue R293 participates in substrate binding. Ca(2+) is bound by residues D294, G298, and D324. R368 lines the substrate pocket. N386 is a glycosylation site (N-linked (GlcNAc...) asparagine; by host). Y402 functions as the Nucleophile in the catalytic mechanism. 2 N-linked (GlcNAc...) asparagine; by host glycosylation sites follow: N434 and N455.

It belongs to the glycosyl hydrolase 34 family. As to quaternary structure, homotetramer. Ca(2+) is required as a cofactor. N-glycosylated.

The protein resides in the virion membrane. The protein localises to the host apical cell membrane. It carries out the reaction Hydrolysis of alpha-(2-&gt;3)-, alpha-(2-&gt;6)-, alpha-(2-&gt;8)- glycosidic linkages of terminal sialic acid residues in oligosaccharides, glycoproteins, glycolipids, colominic acid and synthetic substrates.. Inhibited by the neuraminidase inhibitors zanamivir (Relenza) and oseltamivir (Tamiflu). These drugs interfere with the release of progeny virus from infected cells and are effective against all influenza strains. Resistance to neuraminidase inhibitors is quite rare. Its function is as follows. Catalyzes the removal of terminal sialic acid residues from viral and cellular glycoconjugates. Cleaves off the terminal sialic acids on the glycosylated HA during virus budding to facilitate virus release. Additionally helps virus spread through the circulation by further removing sialic acids from the cell surface. These cleavages prevent self-aggregation and ensure the efficient spread of the progeny virus from cell to cell. Otherwise, infection would be limited to one round of replication. Described as a receptor-destroying enzyme because it cleaves a terminal sialic acid from the cellular receptors. May facilitate viral invasion of the upper airways by cleaving the sialic acid moieties on the mucin of the airway epithelial cells. Likely to plays a role in the budding process through its association with lipid rafts during intracellular transport. May additionally display a raft-association independent effect on budding. Plays a role in the determination of host range restriction on replication and virulence. Sialidase activity in late endosome/lysosome traffic seems to enhance virus replication. The chain is Neuraminidase from Influenza A virus (strain A/New Zealand:South Canterbury/35/2000 H1N1).